We begin with the raw amino-acid sequence, 609 residues long: Putative cell agglutination protein pfl4 (609 aa).

Residues 1–21 (MLFLRFFIFTFFTSIFTVVVS) form the signal peptide. The N-linked (GlcNAc...) asparagine glycan is linked to asparagine 75. The interval 75–391 (NHSTIYTTIN…ASTVVVIPTA (317 aa)) is 9 X 36 AA approximate tandem repeats. 9 consecutive repeat copies span residues 77–110 (STIY…EPTA), 111–146 (GTVT…EPLA), 147–182 (GTVT…EPAV), 183–218 (GTVT…EPTA), 219–254 (GTVT…EPAV), 255–290 (GTVT…EPAV), 291–325 (GTVT…QPTG), 326–361 (GTVT…LPGP), and 362–391 (STIY…IPTA). Asparagine 161 carries an N-linked (GlcNAc...) asparagine glycan. The PA14 domain occupies 427-589 (FTQPAYFGSS…NSYNPTSYAY (163 aa)).

The protein belongs to the mam3/map4 family.

The protein resides in the cell surface. Functionally, may be involved in agglutination during conjugation or other aspects of colony formation. Induces flocculation when overexpressed. This chain is Putative cell agglutination protein pfl4, found in Schizosaccharomyces pombe (strain 972 / ATCC 24843) (Fission yeast).